The chain runs to 232 residues: MAKLSKRLQAFAAKVDRQKLYAIDEALSLVKECASAKFDESIDVAVQLGIDAKKSDQVVRGSVVLPAGTGKSVRVAVFAQGEKAEQARAAGAEVVGMEDLAEQVKAGKLDFDIVIASPDTMRVVGTLGQILGPRGLMPNPKVGTVTPDVATAVKNAKAGQVQFRVDKAGIIHATIGRASFEPTALRSNLNALVDALQKAKPATSKGVYLRKVALSSTMGVGVRVDQASIAAQ.

The protein belongs to the universal ribosomal protein uL1 family. Part of the 50S ribosomal subunit.

Binds directly to 23S rRNA. The L1 stalk is quite mobile in the ribosome, and is involved in E site tRNA release. Functionally, protein L1 is also a translational repressor protein, it controls the translation of the L11 operon by binding to its mRNA. The protein is Large ribosomal subunit protein uL1 of Paraburkholderia phytofirmans (strain DSM 17436 / LMG 22146 / PsJN) (Burkholderia phytofirmans).